The following is a 606-amino-acid chain: Replication protein E1 (606 aa).

The Nuclear localization signal motif lies at 78–80 (KRK). Residues serine 83 and serine 91 each carry the phosphoserine; by host modification. The Nuclear export signal signature appears at 90 to 99 (LSPRLESISL). Residues 146-309 (GSGDVDIHYT…TILGHKSAEA (164 aa)) form a DNA-binding region region. One can recognise an SF3 helicase domain in the interval 408–558 (INFIVFLTAL…FPMKADNTPQ (151 aa)). Residue 434-441 (GPPNSGKS) coordinates ATP. Lysine 515 is covalently cross-linked (Glycyl lysine isopeptide (Lys-Gly) (interchain with G-Cter in SUMO)). Positions 581–606 (DQEEEGEDGESQRAFQCSARSANEHL) are disordered. The span at 593-606 (RAFQCSARSANEHL) shows a compositional bias: polar residues.

It belongs to the papillomaviridae E1 protein family. As to quaternary structure, can form hexamers. Interacts with E2 protein; this interaction increases E1 DNA binding specificity. Interacts with host DNA polymerase subunit POLA2. Interacts with host single stranded DNA-binding protein RPA1. Interacts with host TOP1; this interaction stimulates the enzymatic activity of TOP1. In terms of processing, phosphorylated. Sumoylated.

The protein resides in the host nucleus. The catalysed reaction is Couples ATP hydrolysis with the unwinding of duplex DNA by translocating in the 3'-5' direction.. The enzyme catalyses ATP + H2O = ADP + phosphate + H(+). ATP-dependent DNA 3'-5' helicase required for initiation of viral DNA replication. It forms a complex with the viral E2 protein. The E1-E2 complex binds to the replication origin which contains binding sites for both proteins. During the initial step, a dimer of E1 interacts with a dimer of protein E2 leading to a complex that binds the viral origin of replication with high specificity. Then, a second dimer of E1 displaces the E2 dimer in an ATP-dependent manner to form the E1 tetramer. Following this, two E1 monomers are added to each half of the site, which results in the formation of two E1 trimers on the viral ori. Subsequently, two hexamers will be created. The double hexamer acts as a bi-directional helicase machinery and unwinds the viral DNA and then recruits the host DNA polymerase to start replication. The polypeptide is Replication protein E1 (Human papillomavirus 5).